Consider the following 339-residue polypeptide: MVREKVRISTRTLQWKCVESRADSKRLYYGRFILSPLMKGQADTIGIAMRRALLGEIEGTCITRAKSKKIPHEFSTITGIQESIHEILMNLKEIVLRSNLYGTHNASICVKGPGCVTAQDIILPPSVEIIDNTQHIASLREPIDLHIGLEIERNRGYCMKPPKNFQDGSYSIDAVFMPVRNANHSVHSYGNGNEKQEILFLEIWTNGSLTPKEALHEASRNLIDLFIPFLHAEEESFHLEKNQHKITLPLFAFHDRLAKLRKNQKEIALKSIFIDQLELAPKIYNCLKRSNIHTLWDLLKNSQEDLMKIEHFRIEDVKHIFGILKIEKHFTINLPKNKF.

The alpha N-terminal domain (alpha-NTD) stretch occupies residues 1–233 (MVREKVRIST…DLFIPFLHAE (233 aa)). Residues 267-339 (IALKSIFIDQ…FTINLPKNKF (73 aa)) form an alpha C-terminal domain (alpha-CTD) region.

This sequence belongs to the RNA polymerase alpha chain family. As to quaternary structure, in plastids the minimal PEP RNA polymerase catalytic core is composed of four subunits: alpha, beta, beta', and beta''. When a (nuclear-encoded) sigma factor is associated with the core the holoenzyme is formed, which can initiate transcription.

It is found in the plastid. The protein resides in the chloroplast. It carries out the reaction RNA(n) + a ribonucleoside 5'-triphosphate = RNA(n+1) + diphosphate. DNA-dependent RNA polymerase catalyzes the transcription of DNA into RNA using the four ribonucleoside triphosphates as substrates. This is DNA-directed RNA polymerase subunit alpha from Populus alba (White poplar).